Reading from the N-terminus, the 525-residue chain is Alcohol O-acetyltransferase 1 (525 aa).

Positions Gly24–Arg41 are membrane association. Catalysis depends on charge relay system residues His191 and Asp195. Residues Gln508–Pro525 form a membrane association region.

It belongs to the ATF1 alcohol acetyltransferase family.

The protein resides in the lipid droplet. It localises to the endoplasmic reticulum membrane. It catalyses the reaction an aliphatic alcohol + acetyl-CoA = an acetyl ester + CoA. The catalysed reaction is a fatty acyl-CoA + H2O = a fatty acid + CoA + H(+). The enzyme catalyses 3-methylbutanol + acetyl-CoA = 3-methylbutyl acetate + CoA. With respect to regulation, found to be inhibited by cadmium, copper, zinc and mercurium divalent cations and sulfhydryl reagents. Inhibited by the addition of unsaturated fatty acids to the culture. Its function is as follows. Major alcohol O-acetyltransferase that uses acetyl-CoA to synthesize acetate esters from various alcohols, producing ethyl acetate, isoamyl acetate, isobutyl acetate, butyl acetate, hexyl acetate, heptyl acetate and octyl acetate. The alcohol acyltransferase activity is promiscuous with regard to alcohol but relatively specific for acetyl-CoA since ATF1 does not use any other acyl-CoAs (C3, C4, C5, C6, C8, C10, C12). Acts also as an efficient thioesterase in vitro with specificity towards medium-chain-length acyl-CoAs. In natural environments, the production of aromatic volatile metabolites promotes dispersal through insect vectors. The polypeptide is Alcohol O-acetyltransferase 1 (Saccharomyces cerevisiae (strain ATCC 204508 / S288c) (Baker's yeast)).